A 222-amino-acid chain; its full sequence is uncharacterized protein (222 aa).

This is an uncharacterized protein from Methanocaldococcus jannaschii (strain ATCC 43067 / DSM 2661 / JAL-1 / JCM 10045 / NBRC 100440) (Methanococcus jannaschii).